A 232-amino-acid chain; its full sequence is Phosphoglycolate phosphatase (232 aa).

Aspartate 8 (nucleophile) is an active-site residue. Aspartate 8 and aspartate 10 together coordinate Mg(2+). Lysine 155 contributes to the substrate binding site. Mg(2+) is bound by residues aspartate 178 and aspartate 182.

This sequence belongs to the archaeal SPP-like hydrolase family. Requires Mg(2+) as cofactor.

The catalysed reaction is 2-phosphoglycolate + H2O = glycolate + phosphate. Functionally, catalyzes the dephosphorylation of 2-phosphoglycolate. In Methanospirillum hungatei JF-1 (strain ATCC 27890 / DSM 864 / NBRC 100397 / JF-1), this protein is Phosphoglycolate phosphatase.